A 507-amino-acid chain; its full sequence is Cysteine--tRNA ligase (507 aa).

Residue C29 participates in Zn(2+) binding. The 'HIGH' region motif lies at 31-41; that stretch reads PTVYDVPHIGN. Residues C207, H232, and E236 each contribute to the Zn(2+) site. Positions 265 to 269 match the 'KMSKS' region motif; sequence KMSKS. Residue K268 coordinates ATP.

It belongs to the class-I aminoacyl-tRNA synthetase family. Monomer. The cofactor is Zn(2+).

The protein resides in the cytoplasm. The enzyme catalyses tRNA(Cys) + L-cysteine + ATP = L-cysteinyl-tRNA(Cys) + AMP + diphosphate. This is Cysteine--tRNA ligase from Neorickettsia sennetsu (strain ATCC VR-367 / Miyayama) (Ehrlichia sennetsu).